A 217-amino-acid chain; its full sequence is Growth hormone variant (217 aa).

The N-terminal stretch at 1 to 26 (MAAGSRTSLLLAFGLLCLSWLQEGSA) is a signal peptide. Cystine bridges form between cysteine 79-cysteine 191 and cysteine 208-cysteine 215. Serine 132 is modified (phosphoserine). Asparagine 166 is a glycosylation site (N-linked (GlcNAc...) asparagine). Serine 176 bears the Phosphoserine mark.

Belongs to the somatotropin/prolactin family. As to quaternary structure, monomer, dimer, trimer, tetramer and pentamer, disulfide-linked or non-covalently associated, in homomeric and heteromeric combinations. Can also form a complex either with GHBP or with the alpha2-macroglobulin complex. Expressed in the placenta.

The protein localises to the secreted. Functionally, plays an important role in growth control. Its major role in stimulating body growth is to stimulate the liver and other tissues to secrete IGF1. It stimulates both the differentiation and proliferation of myoblasts. It also stimulates amino acid uptake and protein synthesis in muscle and other tissues. The protein is Growth hormone variant (GH2) of Homo sapiens (Human).